The primary structure comprises 159 residues: RxLR effector protein 24 (159 aa).

Residues 1 to 18 (MRFLVWVFFVGLVTFVSG) form the signal peptide. Positions 58–82 (RFLRSNANQDLTTANDDSDVKEEER) match the RxLR-dEER motif. Residues 109–159 (EKAFQHMMKQGETPTSLAKRLEIGGAAELRYEKVYEKYTAWWINYHTVAGT) are RABA-binding domain.

It belongs to the RxLR effector family. Interacts with potato RABA GTPases including RABA1a, RABA2a and RABA4a.

It localises to the secreted. The protein resides in the host cell membrane. It is found in the host endomembrane system. In terms of biological role, effector protein that contributes to pathogen virulence. Targets members of the RABA GTPases subfamily to inhibit vesicular secretion, leading to an accumulation of secretory proteins in the endoplasmic reticulum. This chain is RxLR effector protein 24, found in Phytophthora infestans (strain T30-4) (Potato late blight agent).